The chain runs to 1415 residues: DNA-directed RNA polymerase subunit beta' (1415 aa).

Cys-69, Cys-71, Cys-84, and Cys-87 together coordinate Zn(2+). Mg(2+)-binding residues include Asp-461, Asp-463, and Asp-465. Zn(2+) is bound by residues Cys-805, Cys-879, Cys-886, and Cys-889.

The protein belongs to the RNA polymerase beta' chain family. In terms of assembly, the RNAP catalytic core consists of 2 alpha, 1 beta, 1 beta' and 1 omega subunit. When a sigma factor is associated with the core the holoenzyme is formed, which can initiate transcription. It depends on Mg(2+) as a cofactor. Zn(2+) is required as a cofactor.

The catalysed reaction is RNA(n) + a ribonucleoside 5'-triphosphate = RNA(n+1) + diphosphate. In terms of biological role, DNA-dependent RNA polymerase catalyzes the transcription of DNA into RNA using the four ribonucleoside triphosphates as substrates. This is DNA-directed RNA polymerase subunit beta' from Anaplasma marginale (strain Florida).